Reading from the N-terminus, the 245-residue chain is Probable phosphatase YcdX (245 aa).

Histidine 7, histidine 9, histidine 15, histidine 40, glutamate 73, histidine 101, histidine 131, aspartate 192, and histidine 194 together coordinate Zn(2+).

This sequence belongs to the PHP family. As to quaternary structure, homotrimer. The cofactor is Zn(2+).

The chain is Probable phosphatase YcdX from Escherichia coli O17:K52:H18 (strain UMN026 / ExPEC).